Here is a 938-residue protein sequence, read N- to C-terminus: Phosphoenolpyruvate carboxylase (938 aa).

Residues His151 and Lys591 contribute to the active site.

Belongs to the PEPCase type 1 family. The cofactor is Mg(2+).

The enzyme catalyses oxaloacetate + phosphate = phosphoenolpyruvate + hydrogencarbonate. Forms oxaloacetate, a four-carbon dicarboxylic acid source for the tricarboxylic acid cycle. The chain is Phosphoenolpyruvate carboxylase from Roseiflexus castenholzii (strain DSM 13941 / HLO8).